The sequence spans 627 residues: ATP-dependent zinc metalloprotease FtsH 2 (627 aa).

Residues 1–7 (MKFSWRT) are Cytoplasmic-facing. Residues 8-28 (ALLWSLPLLVVGFFFWQGSFG) traverse the membrane as a helical segment. Residues 29–117 (GADANLGSNT…SHPVRNNGMV (89 aa)) lie on the Lumenal side of the membrane. A helical transmembrane segment spans residues 118 to 138 (WGFVGNLIFPVLLIASLFFLF). At 139-627 (RRSSNMPGGP…PVKEQLIPQL (489 aa)) the chain is on the cytoplasmic side. 212–219 (GPPGTGKT) lines the ATP pocket. His433 serves as a coordination point for Zn(2+). Glu434 is a catalytic residue. 2 residues coordinate Zn(2+): His437 and Asp511.

This sequence in the central section; belongs to the AAA ATPase family. It in the C-terminal section; belongs to the peptidase M41 family. As to quaternary structure, homohexamer (Potential). Part of a large (&gt;500 kDa) complex that includes FtsH3 and PSII. Coimmunoprecipitates with YidC. The cofactor is Zn(2+).

The protein localises to the cellular thylakoid membrane. Its function is as follows. Acts as a processive, ATP-dependent zinc metallopeptidase for both cytoplasmic and membrane proteins. Plays a role in the quality control of integral membrane proteins. Functionally, plays a role in the selective replacement of photosystem II (PSII) protein D1 in the PSII repair cycle following visible-light and UV-B induced damage. If damaged D1 is not removed then new D1 cannot be inserted to restore the PSII reaction center. Seems to also degrade damaged and/or unassembled PSII proteins D2 and PsbB (CP47). May recognize D1 via its first 20 amino acids, as deletion of these prevents the PSII repair cycle. Also seems to degrade cytoplasmic GGPS, glucosylglycerol-phosphate synthase. The sequence is that of ATP-dependent zinc metalloprotease FtsH 2 (ftsH2) from Synechocystis sp. (strain ATCC 27184 / PCC 6803 / Kazusa).